The chain runs to 251 residues: Phosphate import ATP-binding protein PstB (251 aa).

One can recognise an ABC transporter domain in the interval 5-246 (MNSKDVNFWY…PENKKTEDYI (242 aa)). 37–44 (GPSGCGKS) is a binding site for ATP.

The protein belongs to the ABC transporter superfamily. Phosphate importer (TC 3.A.1.7) family. The complex is composed of two ATP-binding proteins (PstB), two transmembrane proteins (PstC and PstA) and a solute-binding protein (PstS).

Its subcellular location is the cell membrane. The enzyme catalyses phosphate(out) + ATP + H2O = ADP + 2 phosphate(in) + H(+). In terms of biological role, part of the ABC transporter complex PstSACB involved in phosphate import. Responsible for energy coupling to the transport system. The polypeptide is Phosphate import ATP-binding protein PstB (Methanococcus maripaludis (strain DSM 14266 / JCM 13030 / NBRC 101832 / S2 / LL)).